Here is a 373-residue protein sequence, read N- to C-terminus: Flagellar P-ring protein (373 aa).

The N-terminal stretch at 1–28 (MPSVSAVILKLAAAALSALLLSGVAANA) is a signal peptide.

Belongs to the FlgI family. As to quaternary structure, the basal body constitutes a major portion of the flagellar organelle and consists of four rings (L,P,S, and M) mounted on a central rod.

It localises to the periplasm. The protein localises to the bacterial flagellum basal body. Its function is as follows. Assembles around the rod to form the L-ring and probably protects the motor/basal body from shearing forces during rotation. The protein is Flagellar P-ring protein of Rhodopseudomonas palustris (strain HaA2).